The following is a 107-amino-acid chain: Large ribosomal subunit protein P1 (107 aa).

A compositionally biased stretch (low complexity) spans 67–82 (GPASAAPAGAAGAAAP). The interval 67–107 (GPASAAPAGAAGAAAPAEEKAEEKEEEKEESDEDMGFGLFD) is disordered. Acidic residues predominate over residues 90–101 (KEEEKEESDEDM).

The protein belongs to the eukaryotic ribosomal protein P1/P2 family. In terms of assembly, P1 and P2 exist as dimers at the large ribosomal subunit.

It is found in the cytoplasm. In terms of biological role, plays an important role in the elongation step of protein synthesis. The sequence is that of Large ribosomal subunit protein P1 from Penicillium crustosum (Blue mold fungus).